The primary structure comprises 144 residues: MTEQKQVKKPSARRRARECTVQALYSWAVSGNTAEQVELAFVLDQDMDGVDKPYFRKLFRQTIENIETVDFSISPYIDRAFDELDPIETAILRLAVYELRFELDVPYKVVINEAIEVAKVFGADESHKYINGVLDKIAPALGRK.

This sequence belongs to the NusB family.

Functionally, involved in transcription antitermination. Required for transcription of ribosomal RNA (rRNA) genes. Binds specifically to the boxA antiterminator sequence of the ribosomal RNA (rrn) operons. In Haemophilus influenzae (strain PittGG), this protein is Transcription antitermination protein NusB.